The primary structure comprises 727 residues: Elongation factor 2 (727 aa).

One can recognise a tr-type G domain in the interval 19–260 (DQIRNMGICA…MSIKHLPNPL (242 aa)). GTP contacts are provided by residues 28–35 (AHIDHGKT), 94–98 (DTPGH), and 148–151 (NKVD). Position 603 is a diphthamide (histidine 603).

This sequence belongs to the TRAFAC class translation factor GTPase superfamily. Classic translation factor GTPase family. EF-G/EF-2 subfamily.

It is found in the cytoplasm. Catalyzes the GTP-dependent ribosomal translocation step during translation elongation. During this step, the ribosome changes from the pre-translocational (PRE) to the post-translocational (POST) state as the newly formed A-site-bound peptidyl-tRNA and P-site-bound deacylated tRNA move to the P and E sites, respectively. Catalyzes the coordinated movement of the two tRNA molecules, the mRNA and conformational changes in the ribosome. The sequence is that of Elongation factor 2 from Methanococcus maripaludis (strain C5 / ATCC BAA-1333).